The sequence spans 406 residues: Renin (406 aa).

An N-terminal signal peptide occupies residues 1–23; that stretch reads MDGWRRMPRWGLLLLLWGSCTFG. Positions 24–66 are cleaved as a propeptide — activation peptide; it reads LPTDTTTFKRIFLKRMPSIRESLKERGVDMARLGPEWSQPMKR. N-linked (GlcNAc...) asparagine glycosylation occurs at asparagine 71. One can recognise a Peptidase A1 domain in the interval 86-403; sequence YYGEIGIGTP…DRRNNRIGFA (318 aa). Aspartate 104 is an active-site residue. Cysteines 117 and 124 form a disulfide. The N-linked (GlcNAc...) asparagine glycan is linked to asparagine 141. Cysteine 283 and cysteine 287 are disulfide-bonded. The active site involves aspartate 292. Cysteine 325 and cysteine 362 form a disulfide bridge.

Belongs to the peptidase A1 family. As to quaternary structure, interacts with ATP6AP2.

The protein resides in the secreted. It is found in the membrane. It catalyses the reaction Cleavage of Leu-|-Xaa bond in angiotensinogen to generate angiotensin I.. Interaction with ATP6AP2 results in a 5-fold increased efficiency in angiotensinogen processing. Renin is a highly specific endopeptidase, whose only known function is to generate angiotensin I from angiotensinogen in the plasma, initiating a cascade of reactions that produce an elevation of blood pressure and increased sodium retention by the kidney. In Macaca fascicularis (Crab-eating macaque), this protein is Renin (REN).